The following is a 629-amino-acid chain: Sushi domain-containing protein 5 (629 aa).

A signal peptide spans 1-35; that stretch reads MTAEGPSPPARWHRRLPGLWAAALLLLGLPRLSVR. Residues 36 to 574 are Extracellular-facing; it reads ADGKFFVLES…DGCPGLSRGP (539 aa). The 96-residue stretch at 39-134 folds into the Link domain; that stretch reads KFFVLESQNG…GGTYSALCIK (96 aa). 3 cysteine pairs are disulfide-bonded: Cys61/Cys132, Cys140/Cys184, and Cys167/Cys197. A Sushi domain is found at 138-199; that stretch reads KPCGDPPSFP…WYGLVQACGK (62 aa). Residues 225–249 are compositionally biased toward basic and acidic residues; the sequence is EDSRTEADEDRGQGDSSEEAPKQDR. Disordered regions lie at residues 225-252 and 344-403; these read EDSR…RLVS and DGPS…GLDE. Residues 575 to 595 traverse the membrane as a helical segment; that stretch reads VIATIVTVLCLLLLLAGVGMV. Residues 596–629 lie on the Cytoplasmic side of the membrane; it reads WGYRKCQHKSSVYKLNVGQRQARHYHQQIEMEKV.

The protein resides in the membrane. The polypeptide is Sushi domain-containing protein 5 (SUSD5) (Homo sapiens (Human)).